Here is a 133-residue protein sequence, read N- to C-terminus: ATP synthase epsilon chain, chloroplastic (133 aa).

It belongs to the ATPase epsilon chain family. F-type ATPases have 2 components, CF(1) - the catalytic core - and CF(0) - the membrane proton channel. CF(1) has five subunits: alpha(3), beta(3), gamma(1), delta(1), epsilon(1). CF(0) has three main subunits: a, b and c.

The protein resides in the plastid. The protein localises to the chloroplast thylakoid membrane. Produces ATP from ADP in the presence of a proton gradient across the membrane. This is ATP synthase epsilon chain, chloroplastic from Morus indica (Mulberry).